The sequence spans 453 residues: Glutamyl-tRNA reductase (453 aa).

Substrate contacts are provided by residues 49 to 52, Ser-109, 114 to 116, and Gln-120; these read TCNR and EQQ. Catalysis depends on Cys-50, which acts as the Nucleophile. Residue 191-196 coordinates NADP(+); that stretch reads GAGSMG. Positions 432 to 453 are disordered; it reads PAAVATPTDLVDGDRTGRDLQA. A compositionally biased stretch (basic and acidic residues) spans 443-453; it reads DGDRTGRDLQA.

It belongs to the glutamyl-tRNA reductase family. Homodimer.

It catalyses the reaction (S)-4-amino-5-oxopentanoate + tRNA(Glu) + NADP(+) = L-glutamyl-tRNA(Glu) + NADPH + H(+). Its pathway is porphyrin-containing compound metabolism; protoporphyrin-IX biosynthesis; 5-aminolevulinate from L-glutamyl-tRNA(Glu): step 1/2. Its function is as follows. Catalyzes the NADPH-dependent reduction of glutamyl-tRNA(Glu) to glutamate 1-semialdehyde (GSA). This chain is Glutamyl-tRNA reductase, found in Rhodococcus erythropolis (strain PR4 / NBRC 100887).